The sequence spans 166 residues: Ribosomal RNA large subunit methyltransferase H (166 aa).

Residues Leu85, Gly116, and 135–140 (ISKMTF) contribute to the S-adenosyl-L-methionine site.

It belongs to the RNA methyltransferase RlmH family. Homodimer.

Its subcellular location is the cytoplasm. It carries out the reaction pseudouridine(1915) in 23S rRNA + S-adenosyl-L-methionine = N(3)-methylpseudouridine(1915) in 23S rRNA + S-adenosyl-L-homocysteine + H(+). Its function is as follows. Specifically methylates the pseudouridine at position 1915 (m3Psi1915) in 23S rRNA. The chain is Ribosomal RNA large subunit methyltransferase H from Francisella tularensis subsp. holarctica (strain FTNF002-00 / FTA).